The following is a 357-amino-acid chain: MSKQILILPGDGIGHEIVAEAVKVLEHVNVRHTLNLRLSFDALGGAAYEKYGSPLADETLARARDADAVLLGAVGGPQWDTIDPALRPERGLLKIRAQLGLFANLRPALLYPQLADASTLKPEVVAGLDILIVRELTGGLYFGQPRGSRISKNGEREAFDTLPYCESEIRRILKVGFEMARLRGKKLCSVDKANVLASSQLWRTVAGEMAKDYPDVTLSHMYVDNAAMQLVRHPKQFDVIVTENMFGDILSDQASMLTGSIGMLPSASLDANNKGMYEPCHGSAPDIAGQGVANPLATILSVAMLLRYSMGHIKTADAIEHAVGVVLDSGLRTADIWSEGMTKVGTVAMGDAVVAAL.

76-89 (GPQWDTIDPALRPE) serves as a coordination point for NAD(+). Substrate is bound by residues R96, R106, R134, and D224. Positions 224, 248, and 252 each coordinate Mg(2+). 282–294 (GSAPDIAGQGVAN) is a binding site for NAD(+).

The protein belongs to the isocitrate and isopropylmalate dehydrogenases family. LeuB type 1 subfamily. Homodimer. Mg(2+) serves as cofactor. Requires Mn(2+) as cofactor.

Its subcellular location is the cytoplasm. It carries out the reaction (2R,3S)-3-isopropylmalate + NAD(+) = 4-methyl-2-oxopentanoate + CO2 + NADH. The protein operates within amino-acid biosynthesis; L-leucine biosynthesis; L-leucine from 3-methyl-2-oxobutanoate: step 3/4. In terms of biological role, catalyzes the oxidation of 3-carboxy-2-hydroxy-4-methylpentanoate (3-isopropylmalate) to 3-carboxy-4-methyl-2-oxopentanoate. The product decarboxylates to 4-methyl-2 oxopentanoate. The chain is 3-isopropylmalate dehydrogenase from Xylella fastidiosa (strain 9a5c).